The sequence spans 225 residues: Uridylate kinase (225 aa).

Position 9–10 (9–10 (GS)) interacts with ATP. Position 44 (Gly44) interacts with UMP. ATP-binding residues include Gly45 and Arg49. Residues Asp66 and 114–120 (THPGHTT) each bind UMP. Thr140, Asn141, Tyr146, and Asp149 together coordinate ATP.

Belongs to the UMP kinase family. As to quaternary structure, homohexamer.

Its subcellular location is the cytoplasm. It carries out the reaction UMP + ATP = UDP + ADP. It functions in the pathway pyrimidine metabolism; CTP biosynthesis via de novo pathway; UDP from UMP (UMPK route): step 1/1. With respect to regulation, inhibited by UTP. In terms of biological role, catalyzes the reversible phosphorylation of UMP to UDP. This chain is Uridylate kinase, found in Thermococcus onnurineus (strain NA1).